Here is a 305-residue protein sequence, read N- to C-terminus: Acetylglutamate kinase (305 aa).

Residues 67–68 (GG), Arg89, and Asn190 each bind substrate.

This sequence belongs to the acetylglutamate kinase family. ArgB subfamily.

The protein localises to the cytoplasm. The enzyme catalyses N-acetyl-L-glutamate + ATP = N-acetyl-L-glutamyl 5-phosphate + ADP. Its pathway is amino-acid biosynthesis; L-arginine biosynthesis; N(2)-acetyl-L-ornithine from L-glutamate: step 2/4. Its function is as follows. Catalyzes the ATP-dependent phosphorylation of N-acetyl-L-glutamate. The chain is Acetylglutamate kinase from Bifidobacterium longum (strain NCC 2705).